The sequence spans 245 residues: DNA repair protein RecO (245 aa).

This sequence belongs to the RecO family.

Functionally, involved in DNA repair and RecF pathway recombination. The sequence is that of DNA repair protein RecO from Porphyromonas gingivalis (strain ATCC BAA-308 / W83).